The sequence spans 211 residues: MTRVASTSAMNLAKKLAEAGIRHPAVLHAVATTPRELFLDGALAHKAYENTALPIGQGQTISQPYIVARMTELLLQHNPQKVLEIGTGSGYQAAVLASLIPELFTIERIKALQIQARQRLKRLDLHNVAFKYGDGWQGWSNRGPFDGIMVTAAAATVPQALLEQLSEHGVLIIPVGEDTQQLLKITRIGQTFQSEIIEAVKFVPLINGDLA.

Ser62 is a catalytic residue.

The protein belongs to the methyltransferase superfamily. L-isoaspartyl/D-aspartyl protein methyltransferase family.

It is found in the cytoplasm. The enzyme catalyses [protein]-L-isoaspartate + S-adenosyl-L-methionine = [protein]-L-isoaspartate alpha-methyl ester + S-adenosyl-L-homocysteine. Its function is as follows. Catalyzes the methyl esterification of L-isoaspartyl residues in peptides and proteins that result from spontaneous decomposition of normal L-aspartyl and L-asparaginyl residues. It plays a role in the repair and/or degradation of damaged proteins. The chain is Protein-L-isoaspartate O-methyltransferase from Shewanella frigidimarina (strain NCIMB 400).